The chain runs to 298 residues: 5'-AMP-activated protein kinase subunit beta (298 aa).

A disordered region spans residues 1–98 (MGNVQSQEGE…KTHQPYSGPC (98 aa)). Polar residues predominate over residues 19–30 (QDATTTPDNANN). Positions 48-59 (LNQEGEMSDDNQ) are enriched in acidic residues. Polar residues predominate over residues 60-77 (QEGGNNRTSQNGTSGSSG). Residues 78-91 (HTKRRSQTSGKKTH) show a composition bias toward basic residues. 250-252 (DQS) contributes to the ADP binding site.

This sequence belongs to the 5'-AMP-activated protein kinase beta subunit family. AMPK is a heterotrimer of an alpha catalytic subunit (ssp2), a beta (amk2) and a gamma non-catalytic subunits (cbs2). The beta subunit serves as a bridge between the catalytic and the regulatory subunit.

It localises to the cytoplasm. Functionally, beta subunit of AMP-activated protein kinase (AMPK), which is required for transcriptional, metabolic, and developmental adaptations in response to glucose limitation. Has a structural role, mediating heterotrimer formation, and a regulatory role, defining carbon source-regulated subcellular location and substrate specificity of the AMPK kinase complex. The polypeptide is 5'-AMP-activated protein kinase subunit beta (amk2) (Schizosaccharomyces pombe (strain 972 / ATCC 24843) (Fission yeast)).